We begin with the raw amino-acid sequence, 286 residues long: Pantothenate synthetase (286 aa).

An ATP-binding site is contributed by 31 to 38; sequence MGALHDGH. His-38 acts as the Proton donor in catalysis. Position 62 (Gln-62) interacts with (R)-pantoate. Gln-62 lines the beta-alanine pocket. 148–151 contributes to the ATP binding site; that stretch reads GKKD. Position 154 (Gln-154) interacts with (R)-pantoate. Residues Val-177 and 185 to 188 each bind ATP; that span reads KSSR.

Belongs to the pantothenate synthetase family. As to quaternary structure, homodimer.

It localises to the cytoplasm. It catalyses the reaction (R)-pantoate + beta-alanine + ATP = (R)-pantothenate + AMP + diphosphate + H(+). The protein operates within cofactor biosynthesis; (R)-pantothenate biosynthesis; (R)-pantothenate from (R)-pantoate and beta-alanine: step 1/1. Catalyzes the condensation of pantoate with beta-alanine in an ATP-dependent reaction via a pantoyl-adenylate intermediate. The sequence is that of Pantothenate synthetase from Staphylococcus carnosus (strain TM300).